The primary structure comprises 287 residues: Xyloglucan endotransglucosylase protein 1 (287 aa).

A signal peptide spans 1–28 (MAFMSFINGFSTLFLVALLASSMMAAKG). The GH16 domain occupies 29–219 (GNFYQDFDVT…WTKAPFTAYY (191 aa)). Catalysis depends on Glu-105, which acts as the Nucleophile. The Proton donor role is filled by Glu-109. Xyloglucan is bound at residue Glu-109. Asn-113 carries N-linked (GlcNAc...) asparagine glycosylation. Xyloglucan-binding positions include 122–124 (HTN), 132–134 (NRE), 198–199 (DW), and Gly-203. Intrachain disulfides connect Cys-227–Cys-231 and Cys-266–Cys-280. Arg-271 is a binding site for xyloglucan.

Belongs to the glycosyl hydrolase 16 family. XTH group 2 subfamily. Post-translationally, contains at least one intrachain disulfide bond essential for its enzymatic activity. In terms of tissue distribution, expressed in fruit pulp. Expressed in leaves, flowers, calyces, stems and fruits. Highest expression in leaves and lowest in fruits.

It localises to the secreted. It is found in the cell wall. The protein localises to the extracellular space. Its subcellular location is the apoplast. The enzyme catalyses breaks a beta-(1-&gt;4) bond in the backbone of a xyloglucan and transfers the xyloglucanyl segment on to O-4 of the non-reducing terminal glucose residue of an acceptor, which can be a xyloglucan or an oligosaccharide of xyloglucan.. In terms of biological role, catalyzes xyloglucan endotransglycosylation (XET). Cleaves and religates xyloglucan polymers. Does not catalyze xyloglucan endohydrolysis (XEH). Overexpression in Arabidopsis transgenic plants results in elevated tolerance to abiotic stress, such as salt, ABA (abscisic acid) and drought stresses, and in the production of wider leaves. Overexpression in transgenic tomato plants slows down fruit ripening and softening, and the plants produce larger fruits. Both transgenic plants have larger and more irregular cells. Moreover, the fruits of the transgenic tomato have higher density of cell wall and intercellular spaces. May provide cells with more strength and thickness to maintain structural integrity. Probably involved in cell wall assembly and synthesis in fast growing tissues and in the maintenance of firmness in mature fruits. This Diospyros kaki (Kaki persimmon) protein is Xyloglucan endotransglucosylase protein 1.